The following is a 40-amino-acid chain: Cell division inhibitor MciZ (40 aa).

As to quaternary structure, interacts with FtsZ. Binds to the C-terminal polymerization interface of FtsZ. Binds to FtsZ filaments.

With respect to regulation, highly effective in inhibiting polymerization at low and intermediate concentrations of GTP and only partially effective at high GTP concentrations. Its function is as follows. Blocks Z-ring formation in the mother cell during sporulation by inhibiting the polymerization of FtsZ. Binds to the minus end of FtsZ and functions as a filament-capping protein. At high concentrations, is capable of both capping and sequestration of FtsZ. Decreases the GTPase activity of FtsZ. This chain is Cell division inhibitor MciZ, found in Bacillus subtilis (strain 168).